Consider the following 517-residue polypeptide: Ribose import ATP-binding protein RbsA (517 aa).

ABC transporter domains follow at residues 11–251 (LEMR…VGRD) and 263–507 (YDPG…ALAT). 43–50 (GENGAGKS) serves as a coordination point for ATP.

The protein belongs to the ABC transporter superfamily. Ribose importer (TC 3.A.1.2.1) family. The complex is composed of an ATP-binding protein (RbsA), two transmembrane proteins (RbsC) and a solute-binding protein (RbsB).

Its subcellular location is the cell inner membrane. The catalysed reaction is D-ribose(out) + ATP + H2O = D-ribose(in) + ADP + phosphate + H(+). Part of the ABC transporter complex RbsABC involved in ribose import. Responsible for energy coupling to the transport system. This is Ribose import ATP-binding protein RbsA from Burkholderia pseudomallei (strain K96243).